The following is a 117-amino-acid chain: Large ribosomal subunit protein bL20 (117 aa).

Belongs to the bacterial ribosomal protein bL20 family.

Binds directly to 23S ribosomal RNA and is necessary for the in vitro assembly process of the 50S ribosomal subunit. It is not involved in the protein synthesizing functions of that subunit. The protein is Large ribosomal subunit protein bL20 of Mannheimia succiniciproducens (strain KCTC 0769BP / MBEL55E).